The primary structure comprises 161 residues: Cysteine dioxygenase (161 aa).

The Fe cation site is built by His-75, His-77, and His-125.

This sequence belongs to the cysteine dioxygenase family. Requires Fe cation as cofactor.

It catalyses the reaction L-cysteine + O2 = 3-sulfino-L-alanine + H(+). In Bacillus subtilis (strain 168), this protein is Cysteine dioxygenase (cdoA).